The sequence spans 444 residues: MREILHIQGGQCGNQIGAKFWEVICDEHGIDHTGQYVGDSPLQLERIDVYFNEASGGKYVPRAVLMDLEPGTMDSLRSGPFGQIFRPDNFVFGQSGAGNNWAKGHYTEGAELIDSVLDVVRKEAENSDCLQGFQVCHSLGGGTGSGMGTLLISKIREEYPDRMMMTFSVFPSPKVSDTVVEPYNATLSVHQLVENADECMVLDNEALYDICFRTLKLANPTFGDLNHLISATMSGVTCCLRFPGQLNSDLRKLAVNLIPFPRLHFFMVGFAPLTSRGSQQYSALSVPELTQQMWDAKNMMCAADPRHGRYLTASAVFRGKLSTKEVDEQMMNIQNKNSSYFVEWIPNNVKSSVCDIAPKGLKMASTFIGNSTSIQEMFRRVSEQFTAMFRRKAFLHWYTGEGMDEMEFTEAESNMNDLVAEYQQYQDATAGEEEYEEEEEEYET.

8 residues coordinate GTP: glutamine 11, glutamate 69, serine 138, glycine 142, threonine 143, glycine 144, asparagine 204, and asparagine 226. Glutamate 69 is a binding site for Mg(2+).

It belongs to the tubulin family. In terms of assembly, dimer of alpha and beta chains. A typical microtubule is a hollow water-filled tube with an outer diameter of 25 nm and an inner diameter of 15 nM. Alpha-beta heterodimers associate head-to-tail to form protofilaments running lengthwise along the microtubule wall with the beta-tubulin subunit facing the microtubule plus end conferring a structural polarity. Microtubules usually have 13 protofilaments but different protofilament numbers can be found in some organisms and specialized cells. Requires Mg(2+) as cofactor.

It localises to the cytoplasm. It is found in the cytoskeleton. In terms of biological role, tubulin is the major constituent of microtubules, a cylinder consisting of laterally associated linear protofilaments composed of alpha- and beta-tubulin heterodimers. Microtubules grow by the addition of GTP-tubulin dimers to the microtubule end, where a stabilizing cap forms. Below the cap, tubulin dimers are in GDP-bound state, owing to GTPase activity of alpha-tubulin. The sequence is that of Tubulin beta-4 chain (TUBB4) from Arabidopsis thaliana (Mouse-ear cress).